We begin with the raw amino-acid sequence, 419 residues long: Septin-2 (419 aa).

Positions 40–306 (NGFVFNVMCI…ELYRQKRLEQ (267 aa)) constitute a Septin-type G domain. The G1 motif stretch occupies residues 50 to 57 (GETGLGKS). GTP is bound by residues 50 to 57 (GETGLGKS), serine 79, glycine 105, 186 to 194 (KADTISKVE), glycine 240, and arginine 255. Residues 102–105 (DTVG) are G3 motif. The G4 motif stretch occupies residues 185–188 (AKAD). The important for dimerization stretch occupies residues 259-269 (WGTVQVENETH).

Belongs to the TRAFAC class TrmE-Era-EngA-EngB-Septin-like GTPase superfamily. Septin GTPase family. May assemble into a multicomponent structure.

The protein resides in the cytoplasm. It localises to the cytoskeleton. The protein localises to the spindle. Functionally, involved in cytokinesis. The polypeptide is Septin-2 (Drosophila melanogaster (Fruit fly)).